Reading from the N-terminus, the 580-residue chain is Putative ankyrin repeat protein L63 (580 aa).

14 ANK repeats span residues 81–110 (SLNRHFKMSCEKGQYTIVTYLVALGADFRI), 111–140 (DNDYGLIHAAKNGHIGVVKYLVSKGVNIGA), 141–170 (NDNCAIKFASENGHLEVVEYLVSKGADINA), 172–200 (NNYPIEMASKNGHLKVVEYLVSLGVDIRA), 202–230 (DDYVVGLAYYYDHHEVVDYLVSQGAVLNK), 314–339 (SLDDYLVKSCCEGDLSIIKDLILLGA), 340–369 (SERKAVMLACQNGHLEIIRYFVSQGFNIKC), 370–399 (GSNCAVTIASENGHIEVVRYLISLGADINS), 400–429 (GNNYAIKYASENGHLEVVKYLVDQGANIRA), 431–459 (NDRAVRFASRKGHLEVVKYLVSKGANIRA), 461–489 (DDRAVTLASQNGHLEVVKYLVSQGTDIKA), 490–519 (GDDYAVRWASRNGHLEVVKYLISQGANIKA), 521–549 (DDYAVRWASLNGHLEVVKFLVNQNADIRA), and 551–579 (NNYAVRWAHKNKHFDVVEYLISQGAVINP).

The protein is Putative ankyrin repeat protein L63 of Acanthamoeba polyphaga (Amoeba).